The following is a 265-amino-acid chain: Proline-rich protein 23B (265 aa).

The span at 1–18 (MVSRPRSPSAFPAPWWGQ) shows a compositional bias: low complexity. Disordered stretches follow at residues 1–49 (MVSR…EDPA) and 226–265 (PSSPLQPLPPSPCVGSPGPHARSPLPERPPCKARRRLFQA). Pro residues predominate over residues 226-237 (PSSPLQPLPPSP). Basic residues predominate over residues 256 to 265 (CKARRRLFQA).

It belongs to the PRR23 family.

This chain is Proline-rich protein 23B (PRR23B), found in Homo sapiens (Human).